The following is a 203-amino-acid chain: Guanylate kinase (203 aa).

The region spanning 4-183 is the Guanylate kinase-like domain; it reads GKLFVISAPS…ASTLLKSIIW (180 aa). An ATP-binding site is contributed by 11–18; sequence APSGAGKT.

Belongs to the guanylate kinase family.

Its subcellular location is the cytoplasm. It carries out the reaction GMP + ATP = GDP + ADP. In terms of biological role, essential for recycling GMP and indirectly, cGMP. This chain is Guanylate kinase, found in Desulfotalea psychrophila (strain LSv54 / DSM 12343).